We begin with the raw amino-acid sequence, 239 residues long: Glucosamine-6-phosphate deaminase (239 aa).

Asp-62 acts as the Proton acceptor; for enolization step in catalysis. Residue Asn-128 is the For ring-opening step of the active site. His-130 functions as the Proton acceptor; for ring-opening step in the catalytic mechanism. The For ring-opening step role is filled by Glu-135.

Belongs to the glucosamine/galactosamine-6-phosphate isomerase family. NagB subfamily.

The enzyme catalyses alpha-D-glucosamine 6-phosphate + H2O = beta-D-fructose 6-phosphate + NH4(+). It participates in amino-sugar metabolism; N-acetylneuraminate degradation; D-fructose 6-phosphate from N-acetylneuraminate: step 5/5. Functionally, catalyzes the reversible isomerization-deamination of glucosamine 6-phosphate (GlcN6P) to form fructose 6-phosphate (Fru6P) and ammonium ion. This chain is Glucosamine-6-phosphate deaminase, found in Lactobacillus helveticus (strain DPC 4571).